The chain runs to 780 residues: MMVQRLGPISPPASQVSTACKQISPSLPRAVNAANLNRPPSDTRSVILQESLVSTTLSLTESQSALSVKQEWSQSYRAFPSLSSSHSSQNGTDLGDLLSLPPGTPVSGNSVSNSLPPYLFGMENSHSPYPSPRHSATRAHSTRSKKRALSLSPLSDGIGIDFNTIIRTSPTSLVAYINGPRASPANLSPQSEVYGHFLGVRGSCIPQSCAVASGQKGILVASGGHTLPGYGEDGTLEYERMQQLEHGGLQPGPVNNMVLQPGLPGQDGQTANMLKTERLEEFPASALDLPSALPLPLPPPQGPPPPYHAHPHLHHPELLPHTQSLSLAQTGLEEDGEMEDSGGKHCCRWIDCSALYDQQEELVRHIEKVHIDQRKGEDFTCFWTGCPRRYKPFNARYKLLIHMRVHSGEKPNKCTFEGCKKAFSRLENLKIHLRSHTGEKPYLCQHPGCQKAFSNSSDRAKHQRTHLDTKPYACQIPGCTKRYTDPSSLRKHVKAHSSREQQARKKLRSSTELHPDLLTDCLAVQPLQPATSPGDAADHTVGHSPGPGPGPGPGAELYSAPIFASNHSTRSGTAAGAGPPPHPVSHPSPGHNVQGSPHNPSSQLPPLTAVDAGAERFAPPTPSPHHISPGRVPAPPSLLQRAQAPHSQQPPGSLLKPYQPETNSSFQPNGIHVHGFYGQLQTFCPPHYPDSQRTVPPSGSCSMVPSFEDCLVPTSMGQAGFDVFHRAFSTHSGITVYDLPSASSSLFGESLRSGPEDPTFLQLSAVDRCPSQLSSVYTEG.

Polar residues-rich tracts occupy residues 80–92 (PSLS…QNGT) and 106–115 (VSGNSVSNSL). 2 disordered regions span residues 80 to 148 (PSLS…KKRA) and 290 to 315 (PSAL…HLHH). Positions 135-148 (SATRAHSTRSKKRA) are enriched in basic residues. Over residues 293–308 (LPLPLPPPQGPPPPYH) the composition is skewed to pro residues. A C2H2-type 1 zinc finger spans residues 345–370 (HCCRWIDCSALYDQQEELVRHIEKVH). Residues 379–406 (FTCFWTGCPRRYKPFNARYKLLIHMRVH) form a C2H2-type 2; atypical zinc finger. C2H2-type zinc fingers lie at residues 412–436 (NKCT…LRSH), 442–466 (YLCQ…QRTH), and 472–496 (YACQ…VKAH). Disordered regions lie at residues 485-512 (DPSS…SSTE) and 527-670 (LQPA…QPNG). A Bipartite nuclear localization signal motif is present at residues 490 to 506 (RKHVKAHSSREQQARKK). Residues 497–512 (SSREQQARKKLRSSTE) show a composition bias toward basic and acidic residues. Low complexity predominate over residues 567 to 577 (HSTRSGTAAGA). The span at 593–605 (VQGSPHNPSSQLP) shows a compositional bias: polar residues.

It belongs to the GLI C2H2-type zinc-finger protein family. In the embryo, expressed at high levels in the kidney and testis. In the adult, expressed at high levels in the kidney and uterus and at lower levels in the brain, lung, skeletal muscle and pancreas.

It localises to the nucleus. In terms of biological role, acts both as a repressor and activator of transcription. Binds to the consensus sequence 5'-GACCACCCAC-3'. The chain is Zinc finger protein GLIS3 from Mus musculus (Mouse).